A 93-amino-acid chain; its full sequence is Alpha-defensin 3 (93 aa).

Residues 1–16 (MKTLVLLSALVLLAFQ) form the signal peptide. A propeptide spanning residues 17–58 (VQADPIQNTDEETKTEEQPGEDDQAVSVSFGDPEGSSLQEES) is cleaved from the precursor. A disordered region spans residues 22 to 56 (IQNTDEETKTEEQPGEDDQAVSVSFGDPEGSSLQE). 3 disulfide bridges follow: Cys-64–Cys-92, Cys-66–Cys-81, and Cys-71–Cys-91.

It belongs to the alpha-defensin family. As to expression, paneth cells of the small bowel.

The protein localises to the secreted. In terms of biological role, probably contributes to the antimicrobial barrier function of the small bowel mucosa. The polypeptide is Alpha-defensin 3 (Defa3) (Mus musculus (Mouse)).